The primary structure comprises 91 residues: Small ribosomal subunit protein bS18 (91 aa).

It belongs to the bacterial ribosomal protein bS18 family. In terms of assembly, part of the 30S ribosomal subunit. Forms a tight heterodimer with protein bS6.

Its function is as follows. Binds as a heterodimer with protein bS6 to the central domain of the 16S rRNA, where it helps stabilize the platform of the 30S subunit. The chain is Small ribosomal subunit protein bS18 from Paraburkholderia phymatum (strain DSM 17167 / CIP 108236 / LMG 21445 / STM815) (Burkholderia phymatum).